Reading from the N-terminus, the 331-residue chain is Biotin synthase (331 aa).

The region spanning 53-271 (TELQLSQLLS…IAVARIVCPK (219 aa)) is the Radical SAM core domain. Residues cysteine 68, cysteine 72, and cysteine 75 each coordinate [4Fe-4S] cluster. Cysteine 112, cysteine 143, cysteine 203, and arginine 275 together coordinate [2Fe-2S] cluster.

The protein belongs to the radical SAM superfamily. Biotin synthase family. As to quaternary structure, homodimer. Requires [4Fe-4S] cluster as cofactor. [2Fe-2S] cluster serves as cofactor.

The enzyme catalyses (4R,5S)-dethiobiotin + (sulfur carrier)-SH + 2 reduced [2Fe-2S]-[ferredoxin] + 2 S-adenosyl-L-methionine = (sulfur carrier)-H + biotin + 2 5'-deoxyadenosine + 2 L-methionine + 2 oxidized [2Fe-2S]-[ferredoxin]. It functions in the pathway cofactor biosynthesis; biotin biosynthesis; biotin from 7,8-diaminononanoate: step 2/2. In terms of biological role, catalyzes the conversion of dethiobiotin (DTB) to biotin by the insertion of a sulfur atom into dethiobiotin via a radical-based mechanism. The chain is Biotin synthase from Phenylobacterium zucineum (strain HLK1).